Here is a 351-residue protein sequence, read N- to C-terminus: Probable cobalt-factor III C(17)-methyltransferase (351 aa).

The protein belongs to the precorrin methyltransferase family.

It carries out the reaction Co(II)-factor III + S-adenosyl-L-methionine + H(+) = Co(II)-factor IV + S-adenosyl-L-homocysteine. It participates in cofactor biosynthesis; adenosylcobalamin biosynthesis; cob(II)yrinate a,c-diamide from sirohydrochlorin (anaerobic route): step 3/10. Methyltransferase that likely catalyzes the ring contraction and methylation of C-17 in cobalt-factor III to form cobalt-factor IV. May also convert cobalt-precorrin-3 to cobalt-precorrin-4. The polypeptide is Probable cobalt-factor III C(17)-methyltransferase (cbiH) (Methanothermobacter thermautotrophicus (strain ATCC 29096 / DSM 1053 / JCM 10044 / NBRC 100330 / Delta H) (Methanobacterium thermoautotrophicum)).